A 364-amino-acid chain; its full sequence is Ribosomal RNA large subunit methyltransferase M (364 aa).

Residues Ser194, 227–230 (CPGG), Asp246, Asp266, and Asp284 each bind S-adenosyl-L-methionine. Residue Lys313 is the Proton acceptor of the active site.

Belongs to the class I-like SAM-binding methyltransferase superfamily. RNA methyltransferase RlmE family. RlmM subfamily. In terms of assembly, monomer.

The protein resides in the cytoplasm. It carries out the reaction cytidine(2498) in 23S rRNA + S-adenosyl-L-methionine = 2'-O-methylcytidine(2498) in 23S rRNA + S-adenosyl-L-homocysteine + H(+). Functionally, catalyzes the 2'-O-methylation at nucleotide C2498 in 23S rRNA. The chain is Ribosomal RNA large subunit methyltransferase M from Actinobacillus succinogenes (strain ATCC 55618 / DSM 22257 / CCUG 43843 / 130Z).